We begin with the raw amino-acid sequence, 442 residues long: Trigger factor (442 aa).

Positions 163 to 248 (YDRVTINYCI…IIKIEKKQEL (86 aa)) constitute a PPIase FKBP-type domain.

The protein belongs to the FKBP-type PPIase family. Tig subfamily.

The protein resides in the cytoplasm. The enzyme catalyses [protein]-peptidylproline (omega=180) = [protein]-peptidylproline (omega=0). Its function is as follows. Involved in protein export. Acts as a chaperone by maintaining the newly synthesized protein in an open conformation. Functions as a peptidyl-prolyl cis-trans isomerase. This Buchnera aphidicola subsp. Acyrthosiphon pisum (strain Tuc7) protein is Trigger factor.